Reading from the N-terminus, the 287-residue chain is Serine/arginine-rich SC35-like splicing factor SCL33 (287 aa).

The disordered stretch occupies residues 1–34 (MRGRSYTPSPPRGYGRRGRSPSPRGRYGGRSRDL). Residues serine 9 and serine 20 each carry the phosphoserine modification. Positions 36–114 (TSLLVRNLRH…RELTVVFAEE (79 aa)) constitute an RRM domain. The span at 116 to 132 (RKKPTEMRARERGGGRF) shows a compositional bias: basic and acidic residues. The segment at 116–287 (RKKPTEMRAR…QYDEDRSPSQ (172 aa)) is disordered. Serine 165, serine 175, serine 177, serine 188, and serine 190 each carry phosphoserine. The span at 177 to 187 (SPREERYDGRR) shows a compositional bias: basic and acidic residues. Residues 220 to 237 (SISRSPRRSRSPSPKRNR) are compositionally biased toward basic residues. Phosphoserine is present on residues serine 238, serine 248, serine 271, serine 284, and serine 286. Basic residues predominate over residues 244–260 (SISRSPRRSRSPRRSRR). Residues 278–287 (QYDEDRSPSQ) are compositionally biased toward basic and acidic residues.

This sequence belongs to the splicing factor SR family. SCL subfamily. As to quaternary structure, component of the spliceosome. Homodimer. Interacts with AFC2, CYP59, RS2Z33, RNU1 and SR45. The interaction with AFC2 depends on phosphorylation status. Post-translationally, phosphorylated by AFC2. In terms of tissue distribution, ubiquitous. Mostly expressed in roots, fruits and flowers, and, to a lower extent, in leaves.

The protein resides in the nucleus speckle. It localises to the nucleus. The protein localises to the nucleoplasm. It is found in the cytoplasm. Involved in intron recognition and spliceosome assembly. Binds to multiple 5'-GAAG-3' repeats found in its third intron, suggesting autoregulation of alternative splicing. May be necessary for accurate splicing of the 3' region of introns. The protein is Serine/arginine-rich SC35-like splicing factor SCL33 (SCL33) of Arabidopsis thaliana (Mouse-ear cress).